A 131-amino-acid chain; its full sequence is Small ribosomal subunit protein uS8 (131 aa).

It belongs to the universal ribosomal protein uS8 family. As to quaternary structure, part of the 30S ribosomal subunit. Contacts proteins S5 and S12.

Functionally, one of the primary rRNA binding proteins, it binds directly to 16S rRNA central domain where it helps coordinate assembly of the platform of the 30S subunit. In Vesicomyosocius okutanii subsp. Calyptogena okutanii (strain HA), this protein is Small ribosomal subunit protein uS8.